We begin with the raw amino-acid sequence, 149 residues long: Large ribosomal subunit protein bL9 (149 aa).

The protein belongs to the bacterial ribosomal protein bL9 family.

Binds to the 23S rRNA. The chain is Large ribosomal subunit protein bL9 from Shewanella amazonensis (strain ATCC BAA-1098 / SB2B).